The sequence spans 442 residues: Adenylosuccinate synthetase (442 aa).

GTP is bound by residues 30-36 and 58-60; these read GDEGKGK and GHT. Asp-31 (proton acceptor) is an active-site residue. The Mg(2+) site is built by Asp-31 and Gly-58. Residues 31–34, 56–59, Thr-148, Arg-162, Asn-241, Thr-256, and Arg-320 contribute to the IMP site; these read DEGK and NAGH. His-59 acts as the Proton donor in catalysis. 316–322 is a substrate binding site; sequence TTTGRRR. Residues Arg-322, 348–350, and 430–432 contribute to the GTP site; these read KLD and GVG.

Belongs to the adenylosuccinate synthetase family. Homodimer. Mg(2+) is required as a cofactor.

Its subcellular location is the cytoplasm. It catalyses the reaction IMP + L-aspartate + GTP = N(6)-(1,2-dicarboxyethyl)-AMP + GDP + phosphate + 2 H(+). It functions in the pathway purine metabolism; AMP biosynthesis via de novo pathway; AMP from IMP: step 1/2. Its function is as follows. Plays an important role in the de novo pathway and in the salvage pathway of purine nucleotide biosynthesis. Catalyzes the first committed step in the biosynthesis of AMP from IMP. The protein is Adenylosuccinate synthetase of Trichoplax adhaerens (Trichoplax reptans).